A 178-amino-acid polypeptide reads, in one-letter code: Probable inosine/xanthosine triphosphatase (178 aa).

Belongs to the YjjX NTPase family. In terms of assembly, homodimer. Requires Mg(2+) as cofactor. Mn(2+) is required as a cofactor.

It carries out the reaction XTP + H2O = XDP + phosphate + H(+). The catalysed reaction is ITP + H2O = IDP + phosphate + H(+). In terms of biological role, phosphatase that hydrolyzes non-canonical purine nucleotides such as XTP and ITP to their respective diphosphate derivatives. Probably excludes non-canonical purines from DNA/RNA precursor pool, thus preventing their incorporation into DNA/RNA and avoiding chromosomal lesions. The protein is Probable inosine/xanthosine triphosphatase of Pyrobaculum calidifontis (strain DSM 21063 / JCM 11548 / VA1).